The chain runs to 151 residues: Ribosome maturation factor RimP (151 aa).

The protein belongs to the RimP family.

Its subcellular location is the cytoplasm. Required for maturation of 30S ribosomal subunits. This is Ribosome maturation factor RimP from Haemophilus influenzae (strain PittEE).